Consider the following 335-residue polypeptide: Transcriptional adapter 1 (335 aa).

The protein belongs to the TADA1 family. As to quaternary structure, component of the STAGA transcription coactivator-HAT complex, at least composed of SUPT3H, GCN5L2, TAF5L, TAF6L, SUPT7L, TADA3L, TAD1L, TAF10, TAF12, TRRAP and TAF9.

Its subcellular location is the nucleus. Probably involved in transcriptional regulation. The protein is Transcriptional adapter 1 (TADA1) of Bos taurus (Bovine).